Reading from the N-terminus, the 327-residue chain is Phenylalanine--tRNA ligase alpha subunit (327 aa).

A Mg(2+)-binding site is contributed by Glu-252.

It belongs to the class-II aminoacyl-tRNA synthetase family. Phe-tRNA synthetase alpha subunit type 1 subfamily. Tetramer of two alpha and two beta subunits. Mg(2+) is required as a cofactor.

The protein resides in the cytoplasm. It catalyses the reaction tRNA(Phe) + L-phenylalanine + ATP = L-phenylalanyl-tRNA(Phe) + AMP + diphosphate + H(+). In Vibrio campbellii (strain ATCC BAA-1116), this protein is Phenylalanine--tRNA ligase alpha subunit.